A 545-amino-acid polypeptide reads, in one-letter code: Carboxypeptidase N subunit 2 (545 aa).

The N-terminal stretch at 1 to 21 (MLPGAWLLWTSLLLLARPAQP) is a signal peptide. One can recognise an LRRNT domain in the interval 22–49 (CPMGCDCFVQEVFCSDEELATVPLDIPP). N-linked (GlcNAc...) asparagine glycans are attached at residues Asn-74, Asn-111, and Asn-119. 12 LRR repeats span residues 98-119 (RLED…IFSN), 122-143 (SLGK…LFQH), 146-167 (ALES…LFQP), 170-191 (HLKT…LFHP), 194-215 (SLQT…VFGK), 218-239 (SLQE…VFSQ), 242-263 (CLER…IFAS), 266-287 (NLTF…LFAH), 290-311 (CLVG…TFAH), 314-335 (NLRS…IFRD), 338-359 (ELVK…LFQN), and 362-383 (KLEL…IFDT). Asn-228 carries N-linked (GlcNAc...) asparagine glycosylation. Asn-266 is a glycosylation site (N-linked (GlcNAc...) asparagine). Asn-348 and Asn-359 each carry an N-linked (GlcNAc...) asparagine glycan. In terms of domain architecture, LRRCT spans 395-447 (NPWQCDCHLAYLFNWLQQYTDRLLNIQTYCAGPAYLKGQVVPALNEKQLVCPV). A glycan (N-linked (GlcNAc...) asparagine) is linked at Asn-518.

As to quaternary structure, tetramer of two catalytic chains and two glycosylated inactive chains. Post-translationally, whether or not any Cys residues participate in intrachain bonds is unknown, but they do not form interchain disulfide bonds with the 50 kDa catalytic subunit.

The protein localises to the secreted. Functionally, the 83 kDa subunit binds and stabilizes the catalytic subunit at 37 degrees Celsius and keeps it in circulation. Under some circumstances it may be an allosteric modifier of the catalytic subunit. The sequence is that of Carboxypeptidase N subunit 2 (CPN2) from Homo sapiens (Human).